A 282-amino-acid chain; its full sequence is MPVSRFAVFGHPIAHSLSPRIHTEFGRQMGVVLDYLAFDVAPDAFRVSLEHFVAEGGCGANVTLPLKEAAFEVCTTLSARARRAGAVNTLSRVDGVWHGENTDGTGLVRNLTERHGLDLRGRRALLLGAGGAARGVAPALLDAGITEMVIVNRSPERADMLCDALGEPGKVSARYWGDLGDLGNFELIINATSIGNTSDMRTFSLPRSLLDSMTAAVDLNYGSAAVPFLAWAHAVETRYAIDGLGMLVEQAAESFSLWHGRRPDTDPVYTVLHSEYGVPGRS.

Shikimate-binding positions include 16–18 and T63; that span reads SLS. K67 acts as the Proton acceptor in catalysis. Residues N88 and D103 each contribute to the shikimate site. Residues 128 to 132 and G243 contribute to the NADP(+) site; that span reads GAGGA.

Belongs to the shikimate dehydrogenase family. In terms of assembly, homodimer.

The enzyme catalyses shikimate + NADP(+) = 3-dehydroshikimate + NADPH + H(+). It functions in the pathway metabolic intermediate biosynthesis; chorismate biosynthesis; chorismate from D-erythrose 4-phosphate and phosphoenolpyruvate: step 4/7. Involved in the biosynthesis of the chorismate, which leads to the biosynthesis of aromatic amino acids. Catalyzes the reversible NADPH linked reduction of 3-dehydroshikimate (DHSA) to yield shikimate (SA). This Xylella fastidiosa (strain Temecula1 / ATCC 700964) protein is Shikimate dehydrogenase (NADP(+)).